The sequence spans 169 residues: Lipoprotein signal peptidase (169 aa).

The next 4 helical transmembrane spans lie at 4–24 (PICSTGLRWLWLAVVVVILDI), 29–49 (WVMAHFALYESVPLIPFFNLT), 70–90 (WFFAGIAIGISVVLMVMMYRS), and 101–121 (YALIIGGALGNLYDRLVHGAV). Catalysis depends on residues Asp123 and Asp141. Residues 137–157 (FNLADVAISIGAVLVIFEGFL) traverse the membrane as a helical segment.

It belongs to the peptidase A8 family.

The protein localises to the cell inner membrane. It catalyses the reaction Release of signal peptides from bacterial membrane prolipoproteins. Hydrolyzes -Xaa-Yaa-Zaa-|-(S,diacylglyceryl)Cys-, in which Xaa is hydrophobic (preferably Leu), and Yaa (Ala or Ser) and Zaa (Gly or Ala) have small, neutral side chains.. It functions in the pathway protein modification; lipoprotein biosynthesis (signal peptide cleavage). Functionally, this protein specifically catalyzes the removal of signal peptides from prolipoproteins. The chain is Lipoprotein signal peptidase from Yersinia pseudotuberculosis serotype O:1b (strain IP 31758).